The sequence spans 166 residues: Cyclic pyranopterin monophosphate synthase (166 aa).

Substrate contacts are provided by residues 83 to 85 and 121 to 122; these read LCH and ME. The active site involves Asp136.

Belongs to the MoaC family. In terms of assembly, homohexamer; trimer of dimers.

It catalyses the reaction (8S)-3',8-cyclo-7,8-dihydroguanosine 5'-triphosphate = cyclic pyranopterin phosphate + diphosphate. Its pathway is cofactor biosynthesis; molybdopterin biosynthesis. Catalyzes the conversion of (8S)-3',8-cyclo-7,8-dihydroguanosine 5'-triphosphate to cyclic pyranopterin monophosphate (cPMP). This chain is Cyclic pyranopterin monophosphate synthase, found in Trichodesmium erythraeum (strain IMS101).